The sequence spans 80 residues: Conotoxin Bt6.5 (80 aa).

Residues Met-1–Ala-22 form the signal peptide. The propeptide occupies Lys-23–Ser-45. Disulfide bonds link Cys-48-Cys-62, Cys-55-Cys-66, and Cys-61-Cys-73.

Belongs to the conotoxin O1 superfamily. Expressed by the venom duct.

Its subcellular location is the secreted. When injected intracranially in mice, induces a series of symptoms such as quivering, climbing, scratching, barrel rolling and paralysis of limbs. Unexpectedly, no effect is observed on ionic currents when tested on locust DUM neuron. This is Conotoxin Bt6.5 from Conus betulinus (Beech cone).